A 370-amino-acid polypeptide reads, in one-letter code: MAAPGRKINFAAGPAKLPEEVLLKMQEEQLNFNNLGVSVIEMSHRSKEFGALLNETISLIRELMNVPDNFEILFMQGGGTGQFAAIPLNLKGDHEHADYIVTGAWSSKAADEAGKYINVKKVFQPSKPYVTVPDQENWVHDEKAAYLYYCANETVHGIEFTPTAPESHNVPLVADVSSNFMARPFDFKDHGVVFGGAQKNLGAAGLTIVIVRKDLIGKQQAITPSVFSYKEMIANNSLYNTPPTGGIYTTNLVLKWIKSKGGLQAIYELNLQKSGMIYDIIDNSNGFYHCAVDKRYRSIMNVCFRIGGPSGNDELEEKFLKGSIERNMISLKGHRSVGGIRASLYNAISVEETQVLATWMNEFQKLHNTN.

Arg-45 is an L-glutamate binding site. Pyridoxal 5'-phosphate contacts are provided by residues 79–80 (GT), Trp-105, Thr-154, Asp-175, and Gln-198. Lys-199 bears the N6-(pyridoxal phosphate)lysine mark. 240–241 (NT) contributes to the pyridoxal 5'-phosphate binding site.

This sequence belongs to the class-V pyridoxal-phosphate-dependent aminotransferase family. SerC subfamily. As to quaternary structure, homodimer. Pyridoxal 5'-phosphate is required as a cofactor.

The enzyme catalyses O-phospho-L-serine + 2-oxoglutarate = 3-phosphooxypyruvate + L-glutamate. It catalyses the reaction 4-(phosphooxy)-L-threonine + 2-oxoglutarate = (R)-3-hydroxy-2-oxo-4-phosphooxybutanoate + L-glutamate. Its pathway is amino-acid biosynthesis; L-serine biosynthesis; L-serine from 3-phospho-D-glycerate: step 2/3. It participates in cofactor biosynthesis; pyridoxine 5'-phosphate biosynthesis; pyridoxine 5'-phosphate from D-erythrose 4-phosphate: step 3/5. Its function is as follows. Catalyzes the reversible conversion of 3-phosphohydroxypyruvate to phosphoserine and of 3-hydroxy-2-oxo-4-phosphonooxybutanoate to phosphohydroxythreonine. This is Probable phosphoserine aminotransferase from Caenorhabditis elegans.